Here is a 305-residue protein sequence, read N- to C-terminus: UDP-3-O-acyl-N-acetylglucosamine deacetylase (305 aa).

The Zn(2+) site is built by H79, H238, and D242. The active-site Proton donor is the H265.

This sequence belongs to the LpxC family. The cofactor is Zn(2+).

It catalyses the reaction a UDP-3-O-[(3R)-3-hydroxyacyl]-N-acetyl-alpha-D-glucosamine + H2O = a UDP-3-O-[(3R)-3-hydroxyacyl]-alpha-D-glucosamine + acetate. It participates in glycolipid biosynthesis; lipid IV(A) biosynthesis; lipid IV(A) from (3R)-3-hydroxytetradecanoyl-[acyl-carrier-protein] and UDP-N-acetyl-alpha-D-glucosamine: step 2/6. Catalyzes the hydrolysis of UDP-3-O-myristoyl-N-acetylglucosamine to form UDP-3-O-myristoylglucosamine and acetate, the committed step in lipid A biosynthesis. This Histophilus somni (strain 129Pt) (Haemophilus somnus) protein is UDP-3-O-acyl-N-acetylglucosamine deacetylase.